A 159-amino-acid polypeptide reads, in one-letter code: SsrA-binding protein (159 aa).

Positions 133–147 (KRQDLAKRDAQREMA) are enriched in basic and acidic residues. Residues 133-159 (KRQDLAKRDAQREMARAAGRRSKGMDD) are disordered. Residues 150 to 159 (AGRRSKGMDD) are compositionally biased toward basic residues.

Belongs to the SmpB family.

It localises to the cytoplasm. Functionally, required for rescue of stalled ribosomes mediated by trans-translation. Binds to transfer-messenger RNA (tmRNA), required for stable association of tmRNA with ribosomes. tmRNA and SmpB together mimic tRNA shape, replacing the anticodon stem-loop with SmpB. tmRNA is encoded by the ssrA gene; the 2 termini fold to resemble tRNA(Ala) and it encodes a 'tag peptide', a short internal open reading frame. During trans-translation Ala-aminoacylated tmRNA acts like a tRNA, entering the A-site of stalled ribosomes, displacing the stalled mRNA. The ribosome then switches to translate the ORF on the tmRNA; the nascent peptide is terminated with the 'tag peptide' encoded by the tmRNA and targeted for degradation. The ribosome is freed to recommence translation, which seems to be the essential function of trans-translation. The polypeptide is SsrA-binding protein (Salinispora arenicola (strain CNS-205)).